A 492-amino-acid chain; its full sequence is Regulatory protein ViaA (492 aa).

The protein belongs to the ViaA family. As to quaternary structure, homodimer. Interacts with RavA.

The protein localises to the cytoplasm. In terms of biological role, component of the RavA-ViaA chaperone complex, which may act on the membrane to optimize the function of some of the respiratory chains. ViaA stimulates the ATPase activity of RavA. The protein is Regulatory protein ViaA of Pectobacterium atrosepticum (strain SCRI 1043 / ATCC BAA-672) (Erwinia carotovora subsp. atroseptica).